The sequence spans 494 residues: UPF0371 protein spr0309 (494 aa).

It belongs to the UPF0371 family.

The chain is UPF0371 protein spr0309 from Streptococcus pneumoniae (strain ATCC BAA-255 / R6).